The following is a 239-amino-acid chain: Tubulin beta-3 chain (239 aa).

Asn22 is a binding site for GTP. Positions Glu207 to Ala239 are disordered. Positions Xaa230–Ala239 are enriched in acidic residues.

This sequence belongs to the tubulin family. Dimer of alpha and beta chains. A typical microtubule is a hollow water-filled tube with an outer diameter of 25 nm and an inner diameter of 15 nM. Alpha-beta heterodimers associate head-to-tail to form protofilaments running lengthwise along the microtubule wall with the beta-tubulin subunit facing the microtubule plus end conferring a structural polarity. Microtubules usually have 13 protofilaments but different protofilament numbers can be found in some organisms and specialized cells. Requires Mg(2+) as cofactor.

The protein localises to the cytoplasm. The protein resides in the cytoskeleton. Its function is as follows. Tubulin is the major constituent of microtubules, a cylinder consisting of laterally associated linear protofilaments composed of alpha- and beta-tubulin heterodimers. Microtubules grow by the addition of GTP-tubulin dimers to the microtubule end, where a stabilizing cap forms. Below the cap, tubulin dimers are in GDP-bound state, owing to GTPase activity of alpha-tubulin. The protein is Tubulin beta-3 chain (TUBB3) of Anemia phyllitidis (Fern).